The sequence spans 1469 residues: MLSTTMPRSPTQQQPQPNSDASSTSASGSNPGAAIGNGDSAASRSSPKTLNSEPFSTLSPDQIKLTPEEGTEKSGLSTSDKAATGGAPGSGNNLPEGQTMLRQNSTSTINSCLVASPQNSSEHSNSSNVSATVGLTQMVDCDEQSKKNKCSVKDEEAEISSNKAKGQAAGGGCETGSTSSLTVKEEPTDVLGSLVNMKKEERENHSPTMSPVGFGSIGNAQDNSATPVKIERISNDSTTEKKGSSLTMNNDEMSMEGCNQLNPDFINESLNNPAISSILVSGVGPIPGIGVGAGTGNLLTANANGISSGSSNCLDYMQQQNHIFVFSTQLANKGAESVLSGQFQTIIAYHCTQPATKSFLEDFFMKNPLKINKLQRHNSVGMPWIGMGQVGLTPPNPVAKITQQQPHTKTVGLLKPQFNQHENSKRSTVSAPSNSFVDQSDPMGNETELMCWEGGSSNTSRSGQNSRNHVDSISTSSESQAIKILEAAGVDLGQVTKGSDPGLTTENNIVSLQGVKVPDENLTPQQRQHREEQLAKIKKMNQFLFPENENSVGANVSSQITKIPGDLMMGMSGGGGGSIINPTMRQLHMPGNAKSELLSATSSGLSEDVMHPGDVISDMGAVIGCNNNQKTSVQCGSGVGVVTGTTAAGVNVNMHCSSSGAPNGNMMGSSTDMLASFGNTSCNVIGTAPDMSKEVLNQDSRTHSHQGGVAQMEWSKIQHQFFEERLKGGKPRQVTGTVVPQQQTPSGSGGNSLNNQVRPLQGPPPPYHSIQRSASVPIATQSPNPSSPNNLSLPSPRTTAAVMGLPTNSPSMDGTGSLSGSVPQANTSTVQAGTTTVLSANKNCFQADTPSPSNQNRSRNTGSSSVLTHNLSSNPSTPLSHLSPKEFESFGQSSAGDNMKSRRPSPQGQRSPVNSLIEANKDVRFAASSPGFNPHPHMQSNSNSALNAYKMGSTNIQMERQASAQGGSVQFSRRSDNIPLNPNSGNRPPPNKMTQNFDPISSLAQMSQQLTSCVSSMGSPAGTGGMTMMGGPGPSDINIEHGIISGLDGSGIDTINQNNCHSMNVVMNSMGPRMLNPKMCVAGGPNGPPGFNPNSPNGGLRENSIGSGCGSANSSNFQGVVPPGARMMGRMPVNFGSNFNPNIQVKASTPNTIQYMPVRAQNANNNNNNGANNVRMPPSLEFLQRYANPQMGAVGNGSPICPPSASDGTPGMPGLMAGPGAGGMLMNSSGEQHQNKITNNPGASNGINFFQNCNQMSIVDEEGGLPGHDGSMNIGQPSMIRGMRPHAMRPNVMGARMPPVNRQIQFAQSSDGIDCVGDPSSFFTNASCNSAGPHMFGSAQQANQPKTQHIKNIPSGMCQNQSGLAVAQGQIQLHGQGHAQGQSLIGPTNNNLMSTAGSVSATNGVSGINFVGPSSTDLKYAQQYHSFQQQLYATNTRSQQQQHMHQQHQSNMITMPPNLSPNPTFFVNK.

The span at 1 to 16 shows a compositional bias: polar residues; the sequence is MLSTTMPRSPTQQQPQ. 5 disordered regions span residues 1–131, 161–187, 200–222, 422–442, and 454–474; these read MLST…NVSA, SNKA…KEEP, EERE…NAQD, ENSK…QSDP, and GGSS…DSIS. S9 carries the phosphoserine modification. At T11 the chain carries Phosphothreonine. Positions 17–34 are enriched in low complexity; the sequence is PNSDASSTSASGSNPGAA. 2 stretches are compositionally biased toward polar residues: residues 40–60 and 90–113; these read SAAS…TLSP and SGNN…NSCL. Low complexity predominate over residues 116-130; sequence SPQNSSEHSNSSNVS. S206 is modified (phosphoserine). T208 carries the post-translational modification Phosphothreonine. At S210 the chain carries Phosphoserine. Polar residues-rich tracts occupy residues 422 to 438 and 455 to 474; these read ENSK…SFVD and GSSN…DSIS. Residues 511–555 form an ARM-binding region; that stretch reads SLQGVKVPDENLTPQQRQHREEQLAKIKKMNQFLFPENENSVGAN. Disordered stretches follow at residues 728–830, 844–913, and 961–991; these read GGKP…TSTV, CFQA…RSPV, and QASA…PPPN. Over residues 731–745 the composition is skewed to low complexity; that stretch reads PRQVTGTVVPQQQTP. Polar residues predominate over residues 770 to 781; it reads IQRSASVPIATQ. The segment covering 782 to 796 has biased composition (low complexity); the sequence is SPNPSSPNNLSLPSP. Composition is skewed to polar residues over residues 806-830 and 844-880; these read PTNS…TSTV and CFQA…TPLS. Phosphoserine occurs at positions 883, 905, and 911. The segment covering 904 to 913 has biased composition (polar residues); the sequence is PSPQGQRSPV.

Belongs to the BCL9 family. As to quaternary structure, binds to ARM and PYGO.

It localises to the nucleus. In terms of biological role, involved in signal transduction through the Wnt pathway. The polypeptide is Protein BCL9 homolog (lgs) (Drosophila melanogaster (Fruit fly)).